Consider the following 277-residue polypeptide: MLKIGCHLSASKGFKNMGEEAISIGGNTFQFFTRNPRGSKAKTIDETDIKEFLKLAEENNFSKILGHAPYTLNACSADENTRNFAVEIMKDDLERMEYIPNNLYNFHPGSHVKQGVEIGIKYISDMLNTVLKPEQTTTVLLETMAGKGTEIGRTFDELKEILNNVELSHKVGVCLDTCHVHDAGYDIVNNLDKVVEQFDKIIGLDKLCAIHLNDSMNPFGSHKDRHQKIGEGSIGLEGIKNIINHPMLCNLPFFLETPNELDGYAREIKLLKSIYQN.

Zn(2+) contacts are provided by histidine 67, histidine 107, glutamate 142, aspartate 176, histidine 179, histidine 211, aspartate 224, histidine 226, and glutamate 256.

The protein belongs to the AP endonuclease 2 family. The cofactor is Zn(2+).

The catalysed reaction is Endonucleolytic cleavage to 5'-phosphooligonucleotide end-products.. Functionally, endonuclease IV plays a role in DNA repair. It cleaves phosphodiester bonds at apurinic or apyrimidinic (AP) sites, generating a 3'-hydroxyl group and a 5'-terminal sugar phosphate. This is Probable endonuclease 4 from Clostridium beijerinckii (strain ATCC 51743 / NCIMB 8052) (Clostridium acetobutylicum).